The following is a 592-amino-acid chain: Aspartate--tRNA ligase (592 aa).

Residue E180 coordinates L-aspartate. Positions 204–207 (QLFK) are aspartate. L-aspartate is bound at residue R226. Residues 226–228 (RDE) and Q235 contribute to the ATP site. Position 455 (H455) interacts with L-aspartate. E489 serves as a coordination point for ATP. R496 is an L-aspartate binding site. ATP is bound at residue 541 to 544 (GFDR).

It belongs to the class-II aminoacyl-tRNA synthetase family. Type 1 subfamily. As to quaternary structure, homodimer.

It is found in the cytoplasm. It carries out the reaction tRNA(Asp) + L-aspartate + ATP = L-aspartyl-tRNA(Asp) + AMP + diphosphate. Its function is as follows. Catalyzes the attachment of L-aspartate to tRNA(Asp) in a two-step reaction: L-aspartate is first activated by ATP to form Asp-AMP and then transferred to the acceptor end of tRNA(Asp). In Clostridium tetani (strain Massachusetts / E88), this protein is Aspartate--tRNA ligase.